Consider the following 485-residue polypeptide: Cobyric acid synthase (485 aa).

Positions 249-437 (HLKIRVPVWQ…WHGLFSQPSA (189 aa)) constitute a GATase cobBQ-type domain. Residue Cys330 is the Nucleophile of the active site. His429 is a catalytic residue.

The protein belongs to the CobB/CobQ family. CobQ subfamily.

The protein operates within cofactor biosynthesis; adenosylcobalamin biosynthesis. Catalyzes amidations at positions B, D, E, and G on adenosylcobyrinic A,C-diamide. NH(2) groups are provided by glutamine, and one molecule of ATP is hydrogenolyzed for each amidation. The polypeptide is Cobyric acid synthase (Saccharophagus degradans (strain 2-40 / ATCC 43961 / DSM 17024)).